The primary structure comprises 157 residues: Small ribosomal subunit protein uS7 (157 aa).

Belongs to the universal ribosomal protein uS7 family. As to quaternary structure, part of the 30S ribosomal subunit. Contacts proteins S9 and S11.

In terms of biological role, one of the primary rRNA binding proteins, it binds directly to 16S rRNA where it nucleates assembly of the head domain of the 30S subunit. Is located at the subunit interface close to the decoding center, probably blocks exit of the E-site tRNA. This chain is Small ribosomal subunit protein uS7, found in Eikenella corrodens.